Consider the following 292-residue polypeptide: Forkhead box protein R1 (292 aa).

Disordered stretches follow at residues 31–50 and 65–166; these read PPKL…PDYE and PGKL…ASSQ. 2 stretches are compositionally biased toward basic and acidic residues: residues 35–47 and 70–79; these read PLEK…KDGP and VSGRRKREDL. The span at 80 to 89 shows a compositional bias: polar residues; it reads TSTLPSSQPP. The span at 129–140 shows a compositional bias: acidic residues; the sequence is LTEEEEAEDQED. The span at 149–161 shows a compositional bias: basic residues; it reads PHKRAPLQSRRLR. Positions 173-272 form a DNA-binding region, fork-head; the sequence is RPPLNYFHLI…EEARALASTR (100 aa).

As to expression, expressed in testis (at protein level).

Its subcellular location is the nucleus. The protein resides in the cytoplasm. It is found in the perinuclear region. Its function is as follows. Transcription factor which acts as both an activator and a repressor. Activates transcription of a number of genes including the heat shock chaperones HSPA1A and HSPA6 and the antioxidant NADPH-dependent reductase DHRS2 which are involved in protection against oxidative stress. Required for normal brain development. This Homo sapiens (Human) protein is Forkhead box protein R1 (FOXR1).